The chain runs to 1361 residues: DNA-directed RNA polymerase subunit beta (1361 aa).

Belongs to the RNA polymerase beta chain family. The RNAP catalytic core consists of 2 alpha, 1 beta, 1 beta' and 1 omega subunit. When a sigma factor is associated with the core the holoenzyme is formed, which can initiate transcription.

It catalyses the reaction RNA(n) + a ribonucleoside 5'-triphosphate = RNA(n+1) + diphosphate. Its function is as follows. DNA-dependent RNA polymerase catalyzes the transcription of DNA into RNA using the four ribonucleoside triphosphates as substrates. This chain is DNA-directed RNA polymerase subunit beta, found in Dichelobacter nodosus (strain VCS1703A).